A 407-amino-acid polypeptide reads, in one-letter code: MAYDLLLERFLRYAKINTRSDENATRTPTTQSQVDFALNILKPELEELGLSNIHYLESNGYLVATLPANDDRLTRKIGFISHMDTADFNAEGVSPQVIESYDGGIIPLGTSGYNLDPADFPNLQNYIGQTLITTDGTTLLGADDKSGIAEIMTALAHLKANPEIKHCEIRVGFGPDEEIGIGADKFDVDDFDVDFAYTVDGGPLGELQYETFSAAAAELIFHGRNVHPGTAKGQMVNALQLAIDFHNQLPAEDRPELTDGYQGFNHLQTMTGTVEEANSSYIIRDFETESFENRKATFQEIADKMNQAYGQTRVDLVIKDQYYNMRQVIEKDMMPVELAKEVMEDLGIVPVIEPIRGGTDGSKISFMGIPTPNIFAGGENMHGRYEFVSLQTMEKAVDVILGIVSKP.

Histidine 82 contacts Zn(2+). Aspartate 84 is a catalytic residue. Aspartate 143 contacts Zn(2+). The Proton acceptor role is filled by glutamate 177. Glutamate 178, aspartate 200, and histidine 382 together coordinate Zn(2+).

This sequence belongs to the peptidase M20B family. It depends on Zn(2+) as a cofactor.

The protein localises to the cytoplasm. The enzyme catalyses Release of the N-terminal residue from a tripeptide.. In terms of biological role, cleaves the N-terminal amino acid of tripeptides. The chain is Peptidase T from Streptococcus thermophilus (strain CNRZ 1066).